Consider the following 238-residue polypeptide: Ribonuclease 3 (238 aa).

Residues 11–136 (RARLEAAIGY…LIAAIYLDGG (126 aa)) form the RNase III domain. Glu49 is a binding site for Mg(2+). The active site involves Asp53. Residues Asp122 and Glu125 each contribute to the Mg(2+) site. Glu125 is an active-site residue. A DRBM domain is found at 161–230 (DAKTELQEWA…AMKLLEREGV (70 aa)). The segment covering 180 to 193 (YRTEDRSGPDHDPR) has biased composition (basic and acidic residues). A disordered region spans residues 180–215 (YRTEDRSGPDHDPRFTVTVEVDGIDPETGVDRSKRG).

Belongs to the ribonuclease III family. Homodimer. Mg(2+) serves as cofactor.

The protein localises to the cytoplasm. It carries out the reaction Endonucleolytic cleavage to 5'-phosphomonoester.. Its function is as follows. Digests double-stranded RNA. Involved in the processing of primary rRNA transcript to yield the immediate precursors to the large and small rRNAs (23S and 16S). Processes some mRNAs, and tRNAs when they are encoded in the rRNA operon. Processes pre-crRNA and tracrRNA of type II CRISPR loci if present in the organism. This chain is Ribonuclease 3, found in Sinorhizobium medicae (strain WSM419) (Ensifer medicae).